Consider the following 448-residue polypeptide: NADH oxidase (448 aa).

FAD-binding positions include glycine 7–alanine 11, cysteine 42, valine 80, alanine 110–alanine 113, and arginine 132. Cysteine 42 acts as the Redox-active in catalysis. Residues valine 152 to glycine 167, glutamate 179, and glycine 243 contribute to the NAD(+) site. FAD contacts are provided by residues threonine 271 to aspartate 281, glycine 299, and threonine 300. Residue valine 328 coordinates NAD(+). FAD is bound at residue tyrosine 423.

This sequence belongs to the class-III pyridine nucleotide-disulfide oxidoreductase family. FAD serves as cofactor.

The catalysed reaction is 2 NADH + O2 + 2 H(+) = 2 NAD(+) + 2 H2O. Its function is as follows. Catalyzes the four-electron reduction of molecular oxygen to water. This is NADH oxidase from Methanocaldococcus jannaschii (strain ATCC 43067 / DSM 2661 / JAL-1 / JCM 10045 / NBRC 100440) (Methanococcus jannaschii).